A 162-amino-acid polypeptide reads, in one-letter code: Protein LTO1 (162 aa).

Residues 17–53 (GFLEGQNENIKQSFLEGKQYGLQVGFQRFTLLGQMEG) form a deca-GX3 motif; required for interaction with YAE1 and the CIA complex region.

It belongs to the LTO1 family. As to quaternary structure, forms a complex with YAE1; the complex bridges the interaction between the CIA complex and RLI1. Associates with the CIA complex (via its C-terminal tryptophan).

Its subcellular location is the nucleus. Essential for life in oxygen, but nonessential under anaerobic conditions. Required for biogenesis of the large ribosomal subunit and initiation of translation in oxygen. The complex LTO1:YAE1 functions as a target specific adapter that recruits apo-RLI1 to the cytosolic iron-sulfur protein assembly (CIA) complex machinery. This Saccharomyces cerevisiae (strain ATCC 204508 / S288c) (Baker's yeast) protein is Protein LTO1.